The sequence spans 383 residues: MSPGSRGRPRQRLEDRGLMKPPSLSKRRLLPRVQFLPLLLLALAMGLAFYIVWNSWHPGVEEMSRSRDLRVPLIGSLSEAKLRLVVGQLDPQRLWGTFLRPLLIVRPPGSSGNLQVRKFLEATLQSLSAGWHVELDPFTASTPLGPLDFGNVVATLDPGAARHLTLACHYDSKFFPPGLPPFVGATDSAVPCALLLELVQALDAMLSRIKQQAAPVTLQLLFLDGEEALKEWGPKDSLYGSRHLAQIMESIPHSPGPTRIQAIELFVLLDLLGASSPIFFSHFPRTARWFQRLRSIEKRLHRLNLLQSHPQEVMYFQPGEPPGPVEDDHIPFLRRGVPVLHLIATPFPAVWHTPADTEANLHPPTVHNLSRILAVFLAEYLGL.

The chain crosses the membrane as a helical span at residues Val33 to Trp53. The cysteines at positions 168 and 192 are disulfide-linked. Residue Asp187 coordinates Zn(2+). Catalysis depends on Glu226, which acts as the Proton acceptor. Glu227 contacts Zn(2+). The Proton acceptor role is filled by Asp270. Residue His352 coordinates Zn(2+).

It belongs to the glutaminyl-peptide cyclotransferase family. Detected in thalamus, hippocampus, brain cortex, cerebellum, kidney, lung and liver, and at low levels in heart and spleen.

Its subcellular location is the golgi apparatus membrane. The catalysed reaction is N-terminal L-glutaminyl-[peptide] = N-terminal 5-oxo-L-prolyl-[peptide] + NH4(+). Functionally, responsible for the biosynthesis of pyroglutamyl peptides. The polypeptide is Glutaminyl-peptide cyclotransferase-like protein (Qpctl) (Mus musculus (Mouse)).